Consider the following 116-residue polypeptide: Cysteine proteinase inhibitor 1 (116 aa).

The signal sequence occupies residues 1–22; it reads MVPKPLSLLLLLLLALSAAVVG. The Cystatin domain maps to 30–89; the sequence is GGWRPIENLNSAEVQDVAQFAVSEHNKQANDELQYQSVVRGYTQVVAGTNYRLVIAAKDG. The Secondary area of contact motif lies at 73-77; it reads QVVAG. Asn109 is a glycosylation site (N-linked (GlcNAc...) asparagine).

Belongs to the cystatin family. Phytocystatin subfamily.

It is found in the secreted. Its function is as follows. Specific inhibitor of papain family cysteine proteinases. This is Cysteine proteinase inhibitor 1 from Actinidia chinensis var. chinensis (Chinese soft-hair kiwi).